Consider the following 404-residue polypeptide: MALRTIDSLGDLRGRRVIVRCDLNVPLKGGVIGDDGRIRASLGTLTGLREAGARVIVISHLGRPDGTPDEKYSLRPVAARLGELLRADVAFADDTVGDSARAAVEALGDGDVVVLENLRFHAEETSKDETVRRGFAESIAELGDAFVSDGFGVVHRKQASVFELAQALPSAAGSLIASELEVLDRLTENPERPYTVVLGGSKVSDKLGVIGHLLPRVDSLLIGGGMLFTFLKAQGHEVGASLLEEDQVETVKGYLAEAEERGVKIVLPTDVVVADGFSADAAHEVTRADAIEGTPAGAKGLGLDIGPETADAFATIIRGSTTVFWNGPMGVFELEPFAAGTKTVADALTRVEGLSVVGGGDSAAAVRALGFDDDRFGHISTGGGASLEFLEGKRLPGLEVLGWQ.

Substrate-binding positions include 22–24 (DLN), arginine 37, 60–63 (HLGR), arginine 119, and arginine 156. Residues lysine 206, glycine 302, glutamate 333, and 359 to 362 (GGDS) each bind ATP.

The protein belongs to the phosphoglycerate kinase family. As to quaternary structure, monomer.

It is found in the cytoplasm. The catalysed reaction is (2R)-3-phosphoglycerate + ATP = (2R)-3-phospho-glyceroyl phosphate + ADP. It participates in carbohydrate degradation; glycolysis; pyruvate from D-glyceraldehyde 3-phosphate: step 2/5. This is Phosphoglycerate kinase from Clavibacter sepedonicus (Clavibacter michiganensis subsp. sepedonicus).